A 323-amino-acid polypeptide reads, in one-letter code: Phospho-N-acetylmuramoyl-pentapeptide-transferase (323 aa).

9 consecutive transmembrane segments (helical) span residues 12–32 (IVMA…IIIP), 58–78 (PTIG…VMVG), 84–104 (AMIA…DDLL), 120–140 (MILL…YIGT), 151–171 (INLG…VTNA), 177–197 (GLDG…GIIS), 200–220 (LGHI…LAFL), 229–250 (VFMG…ALIL), and 303–323 (KIVS…FASL).

It belongs to the glycosyltransferase 4 family. MraY subfamily. It depends on Mg(2+) as a cofactor.

It is found in the cell membrane. It catalyses the reaction UDP-N-acetyl-alpha-D-muramoyl-L-alanyl-gamma-D-glutamyl-meso-2,6-diaminopimeloyl-D-alanyl-D-alanine + di-trans,octa-cis-undecaprenyl phosphate = di-trans,octa-cis-undecaprenyl diphospho-N-acetyl-alpha-D-muramoyl-L-alanyl-D-glutamyl-meso-2,6-diaminopimeloyl-D-alanyl-D-alanine + UMP. The protein operates within cell wall biogenesis; peptidoglycan biosynthesis. Functionally, catalyzes the initial step of the lipid cycle reactions in the biosynthesis of the cell wall peptidoglycan: transfers peptidoglycan precursor phospho-MurNAc-pentapeptide from UDP-MurNAc-pentapeptide onto the lipid carrier undecaprenyl phosphate, yielding undecaprenyl-pyrophosphoryl-MurNAc-pentapeptide, known as lipid I. The polypeptide is Phospho-N-acetylmuramoyl-pentapeptide-transferase (Clostridium perfringens (strain SM101 / Type A)).